The following is a 371-amino-acid chain: Glycosyltransferase 8 domain-containing protein 1 (371 aa).

At 1-5 (MSFRK) the chain is on the cytoplasmic side. The chain crosses the membrane as a helical; Signal-anchor for type II membrane protein span at residues 6 to 26 (VTIIIWALAVILFLLALHHNF). Residues 27 to 371 (LSLSSLLRND…RRHMDTSNIK (345 aa)) are Lumenal-facing. N-linked (GlcNAc...) asparagine glycosylation occurs at Asn-257.

The protein belongs to the glycosyltransferase 8 family.

The protein localises to the membrane. The sequence is that of Glycosyltransferase 8 domain-containing protein 1 (Glt8d1) from Rattus norvegicus (Rat).